We begin with the raw amino-acid sequence, 340 residues long: Uroporphyrinogen decarboxylase (340 aa).

Substrate is bound by residues 21–25 (RQAGR), aspartate 71, tyrosine 148, serine 203, and histidine 316.

It belongs to the uroporphyrinogen decarboxylase family. In terms of assembly, homodimer.

Its subcellular location is the cytoplasm. The catalysed reaction is uroporphyrinogen III + 4 H(+) = coproporphyrinogen III + 4 CO2. The protein operates within porphyrin-containing compound metabolism; protoporphyrin-IX biosynthesis; coproporphyrinogen-III from 5-aminolevulinate: step 4/4. Catalyzes the decarboxylation of four acetate groups of uroporphyrinogen-III to yield coproporphyrinogen-III. This is Uroporphyrinogen decarboxylase from Campylobacter jejuni (strain RM1221).